The sequence spans 155 residues: Ribosomal RNA large subunit methyltransferase H (155 aa).

Residues Leu-72, Gly-103, and 122 to 127 (LSDLTL) each bind S-adenosyl-L-methionine.

This sequence belongs to the RNA methyltransferase RlmH family. As to quaternary structure, homodimer.

The protein resides in the cytoplasm. The enzyme catalyses pseudouridine(1915) in 23S rRNA + S-adenosyl-L-methionine = N(3)-methylpseudouridine(1915) in 23S rRNA + S-adenosyl-L-homocysteine + H(+). Specifically methylates the pseudouridine at position 1915 (m3Psi1915) in 23S rRNA. The sequence is that of Ribosomal RNA large subunit methyltransferase H from Paracidovorax citrulli (strain AAC00-1) (Acidovorax citrulli).